Here is a 305-residue protein sequence, read N- to C-terminus: Glycine--tRNA ligase alpha subunit (305 aa).

Belongs to the class-II aminoacyl-tRNA synthetase family. As to quaternary structure, tetramer of two alpha and two beta subunits.

It localises to the cytoplasm. It catalyses the reaction tRNA(Gly) + glycine + ATP = glycyl-tRNA(Gly) + AMP + diphosphate. The chain is Glycine--tRNA ligase alpha subunit from Streptococcus pneumoniae (strain 70585).